The sequence spans 590 residues: Conglutin beta 4 (590 aa).

Positions 1–30 (MIKMRVRFPTLVLLLGIVFLMAVSIGIAYG) are cleaved as a signal peptide. Over residues 38–105 (HERPQEREQE…REPRREREQE (68 aa)) the composition is skewed to basic and acidic residues. The tract at residues 38–175 (HERPQEREQE…DSRRQRNPYY (138 aa)) is disordered. The span at 137–146 (QGSSSSSRRQ) shows a compositional bias: low complexity. A Cupin type-1 1 domain is found at 174–332 (YYFSSERFQT…TFNTRYEEIQ (159 aa)). N-linked (GlcNAc...) asparagine glycosylation is present at N239. Disordered stretches follow at residues 340-362 (DEQEDDEQRHGQEQSHQDEGVIV) and 374-396 (KYAQSSSRKGKPSKSGPFNLRSN). Residues 346-362 (EQRHGQEQSHQDEGVIV) are compositionally biased toward basic and acidic residues. The Cupin type-1 2 domain occupies 391–548 (FNLRSNKPIY…TFPGSTEDVE (158 aa)). A glycan (N-linked (GlcNAc...) asparagine) is linked at N498. A disordered region spans residues 559–579 (FANAQPQQQQQREREGRRGRR).

It belongs to the 7S seed storage protein family. As to quaternary structure, component of globulins complexes which accumulate in seeds.

Seed storage protein. Accumulates during seed development and is hydrolyzed after germination to provide a carbon and nitrogen source for the developing seedling. The polypeptide is Conglutin beta 4 (Lupinus angustifolius (Narrow-leaved blue lupine)).